Here is a 146-residue protein sequence, read N- to C-terminus: Snaclec stejaggregin-B subunit beta-2 (146 aa).

The signal sequence occupies residues 1–23; that stretch reads MGRFIFVSFGLLVVFLSLSGSGA. Positions 32 to 143 constitute a C-type lectin domain; sequence YDLYCYRVFQ…CSQTYPFVCK (112 aa). 2 disulfides stabilise this stretch: Cys53–Cys142 and Cys119–Cys134.

It belongs to the snaclec family. As to quaternary structure, heteromultimer; disulfide-linked. Expressed by the venom gland.

The protein resides in the secreted. Its function is as follows. Interferes with one step of hemostasis (modulation of platelet aggregation, or coagulation cascade, for example). The polypeptide is Snaclec stejaggregin-B subunit beta-2 (Trimeresurus stejnegeri (Chinese green tree viper)).